The chain runs to 272 residues: Shikimate dehydrogenase (NADP(+)) (272 aa).

Shikimate contacts are provided by residues 14–16 (SKS) and threonine 61. The Proton acceptor role is filled by lysine 65. Residue glutamate 77 participates in NADP(+) binding. 2 residues coordinate shikimate: asparagine 86 and aspartate 102. NADP(+)-binding positions include 126–130 (GAGGA), 149–154 (NRTVFR), and methionine 213. Position 215 (tyrosine 215) interacts with shikimate. Glycine 237 lines the NADP(+) pocket.

Belongs to the shikimate dehydrogenase family. As to quaternary structure, homodimer.

It catalyses the reaction shikimate + NADP(+) = 3-dehydroshikimate + NADPH + H(+). The protein operates within metabolic intermediate biosynthesis; chorismate biosynthesis; chorismate from D-erythrose 4-phosphate and phosphoenolpyruvate: step 4/7. Functionally, involved in the biosynthesis of the chorismate, which leads to the biosynthesis of aromatic amino acids. Catalyzes the reversible NADPH linked reduction of 3-dehydroshikimate (DHSA) to yield shikimate (SA). In Escherichia coli O127:H6 (strain E2348/69 / EPEC), this protein is Shikimate dehydrogenase (NADP(+)).